The chain runs to 186 residues: MKRKVPNIIITGVPGSGKSTLCEELKEIINKELLKRNDMEGFEMTHLNLSNIIKDERLYKEFDDELDASIYSEELLNEYLKKKYKLEKGGYIIDFHDINFVKDVDIIDKIFLLTIQTNFLYERLEKRNYTKEKIKNNIECEIFQVIKEDILDHFPNTNILQEIENNDLQQYDNNLSIIKNWVLSYI.

Positions 15, 17, 18, 19, and 20 each coordinate ATP. The NMPbind stretch occupies residues 48-71 (NLSNIIKDERLYKEFDDELDASIY). Positions 126 to 136 (KRNYTKEKIKN) are LID. Arg-127 lines the ATP pocket.

It belongs to the adenylate kinase family. AK6 subfamily. As to quaternary structure, monomer and homodimer. Interacts with small ribosomal subunit protein uS11. Not a structural component of 43S pre-ribosomes, but transiently interacts with them by binding to uS11.

It is found in the cytoplasm. Its subcellular location is the nucleus. The catalysed reaction is AMP + ATP = 2 ADP. The enzyme catalyses ATP + H2O = ADP + phosphate + H(+). Functionally, broad-specificity nucleoside monophosphate (NMP) kinase that catalyzes the reversible transfer of the terminal phosphate group between nucleoside triphosphates and monophosphates. Also has ATPase activity. Involved in the late cytoplasmic maturation steps of the 40S ribosomal particles, specifically 18S rRNA maturation. While NMP activity is not required for ribosome maturation, ATPase activity is. Associates transiently with small ribosomal subunit protein uS11. ATP hydrolysis breaks the interaction with uS11. May temporarily remove uS11 from the ribosome to enable a conformational change of the ribosomal RNA that is needed for the final maturation step of the small ribosomal subunit. Its NMP activity may have a role in nuclear energy homeostasis. This Plasmodium falciparum (isolate 3D7) protein is Adenylate kinase isoenzyme 6 homolog.